The primary structure comprises 86 residues: UPF0297 protein LCABL_08470 (86 aa).

It belongs to the UPF0297 family.

The sequence is that of UPF0297 protein LCABL_08470 from Lacticaseibacillus casei (strain BL23) (Lactobacillus casei).